The sequence spans 251 residues: tRNA (guanine-N(7)-)-methyltransferase (251 aa).

S-adenosyl-L-methionine is bound by residues Gly-72, 95 to 96, 132 to 133, and Leu-152; these read EI and NA. Asp-155 is an active-site residue. 230–232 lines the S-adenosyl-L-methionine pocket; it reads SEE.

This sequence belongs to the class I-like SAM-binding methyltransferase superfamily. TrmB family.

It localises to the nucleus. The enzyme catalyses guanosine(46) in tRNA + S-adenosyl-L-methionine = N(7)-methylguanosine(46) in tRNA + S-adenosyl-L-homocysteine. It functions in the pathway tRNA modification; N(7)-methylguanine-tRNA biosynthesis. Catalyzes the formation of N(7)-methylguanine at position 46 (m7G46) in tRNA. This chain is tRNA (guanine-N(7)-)-methyltransferase, found in Drosophila willistoni (Fruit fly).